A 133-amino-acid polypeptide reads, in one-letter code: Glycine cleavage system H protein (133 aa).

Positions 24-106 (IATIGISAYA…YGDGWLLKVR (83 aa)) constitute a Lipoyl-binding domain. An N6-lipoyllysine modification is found at lysine 65.

This sequence belongs to the GcvH family. In terms of assembly, the glycine cleavage system is composed of four proteins: P, T, L and H. It depends on (R)-lipoate as a cofactor.

Its function is as follows. The glycine cleavage system catalyzes the degradation of glycine. The H protein shuttles the methylamine group of glycine from the P protein to the T protein. The chain is Glycine cleavage system H protein from Crocosphaera subtropica (strain ATCC 51142 / BH68) (Cyanothece sp. (strain ATCC 51142)).